The following is a 563-amino-acid chain: Serine/threonine-protein kinase WNK8 (563 aa).

The region spanning 29–286 is the Protein kinase domain; that stretch reads IRYDDVLGRG…ALELSKDPFL (258 aa). Residues 109-112 and Lys-159 each bind ATP; that span reads TELF. Asp-176 functions as the Proton acceptor in the catalytic mechanism. The segment covering 426–436 has biased composition (polar residues); it reads TSSHHNQNSPR. The disordered stretch occupies residues 426-459; the sequence is TSSHHNQNSPRLTHEDHEAANQQTVNSKDEEAAG. Phosphoserine is present on Ser-509.

Belongs to the protein kinase superfamily. Ser/Thr protein kinase family. WNK subfamily. As to quaternary structure, interacts with RGS1 and GB1, but not with GPA1. The association with RGS1 at the plasma membrane is triggered by induction of glucose. Binds to EDM2 in nucleus. Autophosphorylated.

It localises to the nucleus. It carries out the reaction L-seryl-[protein] + ATP = O-phospho-L-seryl-[protein] + ADP + H(+). The catalysed reaction is L-threonyl-[protein] + ATP = O-phospho-L-threonyl-[protein] + ADP + H(+). Regulates flowering time by modulating the photoperiod pathway. Phosphorylates the vacuolar ATPase subunit C (VATC) and RGS1. Regulates EDM2 that, in turn, modulates development processes. The chain is Serine/threonine-protein kinase WNK8 (WNK8) from Arabidopsis thaliana (Mouse-ear cress).